The primary structure comprises 163 residues: Beta-lactoglobulin-2 (163 aa).

2 disulfide bridges follow: Cys66–Cys161 and Cys106–Cys120.

Belongs to the calycin superfamily. Lipocalin family. In terms of assembly, monomer.

It localises to the secreted. Functionally, lactoglobulin is the primary component of whey, it binds retinol and is probably involved in the transport of that molecule. The sequence is that of Beta-lactoglobulin-2 (LGB2) from Felis catus (Cat).